A 153-amino-acid chain; its full sequence is Nuclear cap-binding protein subunit 2 (153 aa).

MRNA contacts are provided by residues tyrosine 17, tyrosine 40, 109-113 (RTDWD), 120-124 (RQYGR), and 130-131 (QV). Residues 37–115 (CTLYVGNLSF…RIIRTDWDAG (79 aa)) form the RRM domain.

Belongs to the RRM NCBP2 family. In terms of assembly, component of the nuclear cap-binding complex (CBC), a heterodimer composed of ncbp1/cbp80 and ncbp2/cbp20 that interacts with m7GpppG-capped RNA.

Its subcellular location is the nucleus. The protein localises to the cytoplasm. Its function is as follows. Component of the cap-binding complex (CBC), which binds co-transcriptionally to the 5' cap of pre-mRNAs and is involved in various processes such as pre-mRNA splicing, translation regulation, nonsense-mediated mRNA decay, RNA-mediated gene silencing (RNAi) by microRNAs (miRNAs) and mRNA export. The CBC complex is involved in mRNA export from the nucleus, leading to the recruitment of the mRNA export machinery to the 5' end of mRNA and to mRNA export in a 5' to 3' direction through the nuclear pore. The CBC complex is also involved in mediating U snRNA and intronless mRNAs export from the nucleus. The CBC complex is essential for a pioneer round of mRNA translation, before steady state translation when the CBC complex is replaced by cytoplasmic cap-binding protein eIF4E. The pioneer round of mRNA translation mediated by the CBC complex plays a central role in nonsense-mediated mRNA decay (NMD), NMD only taking place in mRNAs bound to the CBC complex, but not on eIF4E-bound mRNAs. The CBC complex enhances NMD in mRNAs containing at least one exon-junction complex (EJC), promoting the interaction between upf1 and upf2. The CBC complex is also involved in 'failsafe' NMD, which is independent of the EJC complex, while it does not participate in Staufen-mediated mRNA decay (SMD). During cell proliferation, the CBC complex is also involved in microRNAs (miRNAs) biogenesis via its interaction with srrt/ars2, thereby being required for miRNA-mediated RNA interference. The CBC complex also acts as a negative regulator of parn, thereby acting as an inhibitor of mRNA deadenylation. In the CBC complex, ncbp2/cbp20 recognizes and binds capped RNAs (m7GpppG-capped RNA) but requires ncbp1/cbp80 to stabilize the movement of its N-terminal loop and lock the CBC into a high affinity cap-binding state with the cap structure. The conventional cap-binding complex with NCBP2 binds both small nuclear RNA (snRNA) and messenger (mRNA) and is involved in their export from the nucleus. This is Nuclear cap-binding protein subunit 2 (ncbp2) from Xenopus tropicalis (Western clawed frog).